A 76-amino-acid chain; its full sequence is Serine proteinase inhibitor IA-1 (76 aa).

Ser-1 is subject to N-acetylserine.

It belongs to the protease inhibitor I9 family.

Specifically inhibits an endogenous intracellular serine proteinase (proteinase A). In Pleurotus ostreatus (Oyster mushroom), this protein is Serine proteinase inhibitor IA-1.